A 1260-amino-acid polypeptide reads, in one-letter code: Neural cell adhesion molecule L1 (1260 aa).

Residues 1–19 (MVVMLRYVWPLLLCSPCLL) form the signal peptide. Over 20-1123 (IQIPDEYKGH…VSTTGSFASE (1104 aa)) the chain is Extracellular. 6 Ig-like C2-type domains span residues 35-130 (PVIT…IQLV), 138-225 (PKET…EPID), 239-327 (PRLL…YYVT), 332-419 (PYWL…AYIY), 424-506 (PARI…NNVT), and 517-600 (TQIT…DEVE). 2 disulfides stabilise this stretch: cysteine 57/cysteine 113 and cysteine 157/cysteine 208. N-linked (GlcNAc...) asparagine glycans are attached at residues asparagine 100, asparagine 202, asparagine 246, and asparagine 293. 2 cysteine pairs are disulfide-bonded: cysteine 263–cysteine 311 and cysteine 353–cysteine 403. N-linked (GlcNAc...) asparagine glycans are attached at residues asparagine 432, asparagine 478, asparagine 489, and asparagine 504. Cysteine 447 and cysteine 496 are joined by a disulfide. Cysteine 538 and cysteine 590 form a disulfide bridge. 2 short sequence motifs (cell attachment site) span residues 553 to 555 (RGD) and 562 to 564 (RGD). 2 N-linked (GlcNAc...) asparagine glycosylation sites follow: asparagine 587 and asparagine 670. 5 Fibronectin type-III domains span residues 613-711 (PVPH…TPEA), 716-809 (NPVD…SGED), 811-916 (PQVS…PEGV), 919-1015 (HPEA…MALF), and 1014-1112 (LFGK…TGPV). Residues 697-724 (GEPSPVSESVVTPEAAPEKNPVDVRGEG) form a disordered region. Residues 712-724 (APEKNPVDVRGEG) show a composition bias toward basic and acidic residues. 11 N-linked (GlcNAc...) asparagine glycosylation sites follow: asparagine 725, asparagine 776, asparagine 824, asparagine 848, asparagine 875, asparagine 968, asparagine 978, asparagine 1022, asparagine 1030, asparagine 1073, and asparagine 1107. The helical transmembrane segment at 1124–1146 (GWFIAFVSAIILLLLILLILCFI) threads the bilayer. Residues 1147 to 1260 (KRSKGGKYSV…SPINPAVALE (114 aa)) are Cytoplasmic-facing. 7 positions are modified to phosphoserine: serine 1166, serine 1181, serine 1184, serine 1197, serine 1246, serine 1247, and serine 1251. Disordered stretches follow at residues 1183 to 1210 (ESDN…SDDS) and 1229 to 1260 (IGQY…VALE). Residues 1244 to 1253 (NDSSGATSPI) are compositionally biased toward polar residues.

Belongs to the immunoglobulin superfamily. L1/neurofascin/NgCAM family. Interacts with SHTN1; the interaction occurs in axonal growth cones. Interacts with isoform 2 of BSG. As to expression, expressed in the brain, including in the molecular layer of the cerebellar cortex, the fiber-rich layers of the hippocampus (alveus, and strata lacunosum moleculare, radiatum, and oriens), the nerve fiber layer and the inner and outer plexiform layers of the retina, and in the molecular layer of the olfactory bulb (at protein level).

It is found in the cell membrane. The protein resides in the cell projection. The protein localises to the growth cone. Functionally, neural cell adhesion molecule involved in the dynamics of cell adhesion and in the generation of transmembrane signals at tyrosine kinase receptors. During brain development, critical in multiple processes, including neuronal migration, axonal growth and fasciculation, and synaptogenesis. In the mature brain, plays a role in the dynamics of neuronal structure and function, including synaptic plasticity. The sequence is that of Neural cell adhesion molecule L1 (L1cam) from Mus musculus (Mouse).